The primary structure comprises 107 residues: MEKVLKSLFETIENRKQSPLQGSYTNYLLTKGADKILKKIGEECTEVVIAAKNDNKEEIVKEMVDVLYHCFVLLVAKNISLEEIEKEVRERTGKISKTEERKEIDTL.

The protein belongs to the PRA-PH family.

It is found in the cytoplasm. The enzyme catalyses 1-(5-phospho-beta-D-ribosyl)-ATP + H2O = 1-(5-phospho-beta-D-ribosyl)-5'-AMP + diphosphate + H(+). The protein operates within amino-acid biosynthesis; L-histidine biosynthesis; L-histidine from 5-phospho-alpha-D-ribose 1-diphosphate: step 2/9. In Bacillus cytotoxicus (strain DSM 22905 / CIP 110041 / 391-98 / NVH 391-98), this protein is Phosphoribosyl-ATP pyrophosphatase.